The sequence spans 186 residues: Signal peptidase I (186 aa).

The Cytoplasmic segment spans residues 1-19 (MTEEKSTNKKNSLFEWVKA). Residues 20 to 40 (IIIAVVLALLIRAFLFEPYLV) traverse the membrane as a helical segment. Over 41–186 (EGTSMDPTLH…FPFNEIRKTD (146 aa)) the chain is Extracellular. Active-site residues include Ser44 and Lys86.

Belongs to the peptidase S26 family.

The protein resides in the cell membrane. The enzyme catalyses Cleavage of hydrophobic, N-terminal signal or leader sequences from secreted and periplasmic proteins.. The protein is Signal peptidase I (lepB) of Bacillus licheniformis.